The chain runs to 346 residues: tRNA N6-adenosine threonylcarbamoyltransferase (346 aa).

The Fe cation site is built by histidine 111 and histidine 115. Substrate-binding positions include 134–138, aspartate 167, glycine 180, and asparagine 279; that span reads LVSGG. Residue aspartate 307 participates in Fe cation binding.

This sequence belongs to the KAE1 / TsaD family. Fe(2+) is required as a cofactor.

It localises to the cytoplasm. It catalyses the reaction L-threonylcarbamoyladenylate + adenosine(37) in tRNA = N(6)-L-threonylcarbamoyladenosine(37) in tRNA + AMP + H(+). Functionally, required for the formation of a threonylcarbamoyl group on adenosine at position 37 (t(6)A37) in tRNAs that read codons beginning with adenine. Is involved in the transfer of the threonylcarbamoyl moiety of threonylcarbamoyl-AMP (TC-AMP) to the N6 group of A37, together with TsaE and TsaB. TsaD likely plays a direct catalytic role in this reaction. In Burkholderia mallei (strain ATCC 23344), this protein is tRNA N6-adenosine threonylcarbamoyltransferase.